The following is a 590-amino-acid chain: TPR repeat-containing protein PA4667 (590 aa).

TPR repeat units lie at residues 235 to 268, 269 to 302, 370 to 403, 405 to 438, and 508 to 541; these read VAPL…HPDD, KRVR…FPDD, LPAQ…QPDY, IQLY…YPED, and PAIL…YPDH.

The polypeptide is TPR repeat-containing protein PA4667 (Pseudomonas aeruginosa (strain ATCC 15692 / DSM 22644 / CIP 104116 / JCM 14847 / LMG 12228 / 1C / PRS 101 / PAO1)).